The primary structure comprises 202 residues: LexA repressor (202 aa).

Positions 28-48 (IAEIARAIGVSSPHGVREQLR) form a DNA-binding region, H-T-H motif. Active-site for autocatalytic cleavage activity residues include serine 120 and lysine 157.

The protein belongs to the peptidase S24 family. Homodimer.

It carries out the reaction Hydrolysis of Ala-|-Gly bond in repressor LexA.. Functionally, represses a number of genes involved in the response to DNA damage (SOS response), including recA and lexA. In the presence of single-stranded DNA, RecA interacts with LexA causing an autocatalytic cleavage which disrupts the DNA-binding part of LexA, leading to derepression of the SOS regulon and eventually DNA repair. This Methylococcus capsulatus (strain ATCC 33009 / NCIMB 11132 / Bath) protein is LexA repressor.